The following is a 280-amino-acid chain: Putative high affinity immunoglobulin gamma Fc receptor IB (280 aa).

The N-terminal stretch at Met-1 to Gly-15 is a signal peptide. Residues Gln-16–His-198 are Extracellular-facing. 2 Ig-like C2-type domains span residues Ala-22–His-101 and Pro-95–Tyr-184. Cystine bridges form between Cys-43–Cys-85 and Cys-124–Cys-168. N-linked (GlcNAc...) asparagine glycosylation is found at Asn-59, Asn-152, and Asn-163. Residues Val-199–Ile-219 form a helical membrane-spanning segment. Topologically, residues Arg-220–Thr-280 are cytoplasmic. Residues Lys-258–Thr-280 are disordered.

It belongs to the immunoglobulin superfamily. FCGR1 family.

It localises to the cell membrane. Functionally, may bind to the Fc region of immunoglobulins gamma with a low affinity compared to FCGR1A. May function in the humoral immune response. This Homo sapiens (Human) protein is Putative high affinity immunoglobulin gamma Fc receptor IB.